The following is a 75-amino-acid chain: Peptide Ctri10036 (75 aa).

The signal sequence occupies residues 1–22 (MNSKYLFVFLILNVIFIDLCQG). A Lysine amide modification is found at Lys-41. Positions 47–75 (ELGSQYDYLQDFRKRELDLDDLLSKFPDY) are excised as a propeptide.

Belongs to the non-disulfide-bridged peptide (NDBP) superfamily. Short antimicrobial peptide (group 4) family. In terms of tissue distribution, expressed by the venom gland.

The protein localises to the secreted. This is Peptide Ctri10036 from Chaerilus tricostatus (Scorpion).